The chain runs to 546 residues: Nuclear pore complex protein Nup58 (546 aa).

Tandem repeats lie at residues Phe22–Gly23, Phe36–Gly37, Phe45–Gly46, Phe64–Gly65, Phe73–Gly74, Phe82–Gly83, Phe92–Gly93, Phe101–Gly102, Phe110–Gly111, Phe119–Gly120, Phe128–Gly129, Phe137–Gly138, Phe146–Gly147, Phe155–Gly156, Phe166–Gly167, Phe197–Gly198, and Phe199–Gly200. The 17 X 2 AA repeats of F-G stretch occupies residues Phe22–Gly200.

This sequence belongs to the NUP58 family. In terms of assembly, component of the nuclear pore complex. Interacts with Nup54. Interacts (via C-terminus) with fs(1)Yb; this interaction occurs in a RNA-independent manner. Interacts with sbr/nxf1. Interacts with Nxt1. In terms of processing, O-glycosylated; contains O-GlcNAc. O-GlcNAcylation increases with increasing ambient temperature.

The protein localises to the nucleus. It localises to the nuclear pore complex. Its function is as follows. Component of the nuclear pore complex, a complex required for the trafficking across the nuclear membrane. Together with Nup54, required for transposable element silencing regulation in ovarian follicle cells. By interacting with the nuclear (Nxf1/Nxt1) and cytosolic (fs(1)Yb) components of the flamenco (flam) transcripts processing pathway, enables export and subsequent piRNA production. This chain is Nuclear pore complex protein Nup58, found in Drosophila melanogaster (Fruit fly).